The sequence spans 180 residues: UPF0227 protein YcfP (180 aa).

It belongs to the UPF0227 family.

The polypeptide is UPF0227 protein YcfP (Salmonella agona (strain SL483)).